Here is a 336-residue protein sequence, read N- to C-terminus: Iron-uptake system permease protein FeuC (336 aa).

9 helical membrane-spanning segments follow: residues 7–27, 57–77, 85–105, 120–140, 150–170, 191–211, 246–266, 280–300, and 308–328; these read LFIA…SFSV, VVMA…IQAI, PGIL…MLLF, MPLF…IFAW, IILV…FLSL, ANWT…PILI, VAII…GLIA, YILP…DFAG, and EVPA…YLLF.

It belongs to the binding-protein-dependent transport system permease family. FecCD subfamily. In terms of assembly, the complex is composed of one ATP-binding protein (YusV), two transmembrane proteins (FeuB and FeuC) and a solute-binding protein (FeuA).

Its subcellular location is the cell membrane. Its function is as follows. Involved in the uptake of iron. Probably responsible for the translocation of the substrate across the membrane. Part of the ABC transporter complex FeuABC/YusV involved in import of the catecholate siderophores bacillibactin and enterobactin. In Bacillus subtilis (strain 168), this protein is Iron-uptake system permease protein FeuC (feuC).